We begin with the raw amino-acid sequence, 1363 residues long: Insulin-like peptide receptor (1363 aa).

Positions 1-29 (MRVVDKMAGLMWAALTLVIGLGLLVPSNG) are cleaved as a signal peptide. N51, N97, N137, N278, N483, N599, N617, N665, N666, N711, N732, N736, N743, N816, N885, and N898 each carry an N-linked (GlcNAc...) asparagine glycan. 2 Fibronectin type-III domains span residues 473–586 (SFSR…TDAD) and 590–680 (HPQD…CPKS). Fibronectin type-III domains follow at residues 712-804 (ETRA…LART) and 813-912 (IPGN…VEEE). The Extracellular portion of the chain corresponds to 721–928 (ELPVTARPFY…QDPQQQVPVS (208 aa)). Positions 739 to 759 (LPSTNRTVPPTPTPNPNPQLE) are disordered. A helical membrane pass occupies residues 929 to 949 (LMIGMGVGFSLLLILAVIFGI). The Cytoplasmic portion of the chain corresponds to 950 to 1363 (WYCTKKRFGD…NLRIPKSTLC (414 aa)). The 290-residue stretch at 994-1283 (ITLIRELGQG…EIVEILSPEL (290 aa)) folds into the Protein kinase domain. Residues 1000 to 1008 (LGQGSFGMV) and K1028 contribute to the ATP site. The segment at 1091-1117 (PEEDVGLSDSPASNEAKNSPFAENDND) is disordered. Catalysis depends on D1148, which acts as the Proton acceptor. A Phosphotyrosine; by autocatalysis modification is found at Y1174. The segment at 1316 to 1363 (DTETEMYPSGSEFSSTPSPPSETPYSHMNGSHPQNGSMNLRIPKSTLC) is disordered. Over residues 1322–1331 (YPSGSEFSST) the composition is skewed to low complexity. Positions 1343-1353 (MNGSHPQNGSM) are enriched in polar residues.

Belongs to the protein kinase superfamily. Tyr protein kinase family. Insulin receptor subfamily. As to quaternary structure, probable tetramer of 2 alpha and 2 beta chains linked by disulfide bonds. The alpha chains contribute to the formation of the ligand-binding domain, while the beta chains carry the kinase domain. The cofactor is Mn(2+).

The protein localises to the membrane. The enzyme catalyses L-tyrosyl-[protein] + ATP = O-phospho-L-tyrosyl-[protein] + ADP + H(+). In terms of biological role, this receptor binds to the insulin related peptide and has a tyrosine-protein kinase activity. This Branchiostoma lanceolatum (Common lancelet) protein is Insulin-like peptide receptor.